We begin with the raw amino-acid sequence, 747 residues long: Fatty acid oxidation complex subunit alpha (747 aa).

Residues 1 to 197 (MGASATNSVT…KMGLVDDVVP (197 aa)) form an enoyl-CoA hydratase region. Residues 313–747 (RAIHRVGVLG…NIDEVTDVAS (435 aa)) form a 3-hydroxyacyl-CoA dehydrogenase region. A disordered region spans residues 590-614 (YLYSNPTKNSSPTKNGNSPAKRNSF). Positions 593–610 (SNPTKNSSPTKNGNSPAK) are enriched in polar residues.

This sequence in the N-terminal section; belongs to the enoyl-CoA hydratase/isomerase family. The protein in the central section; belongs to the 3-hydroxyacyl-CoA dehydrogenase family. Heterotetramer of two alpha chains (FadJ) and two beta chains (FadI).

Its subcellular location is the cytoplasm. The enzyme catalyses a (3S)-3-hydroxyacyl-CoA = a (2E)-enoyl-CoA + H2O. It catalyses the reaction a 4-saturated-(3S)-3-hydroxyacyl-CoA = a (3E)-enoyl-CoA + H2O. The catalysed reaction is a (3S)-3-hydroxyacyl-CoA + NAD(+) = a 3-oxoacyl-CoA + NADH + H(+). It carries out the reaction (3S)-3-hydroxybutanoyl-CoA = (3R)-3-hydroxybutanoyl-CoA. It functions in the pathway lipid metabolism; fatty acid beta-oxidation. In terms of biological role, catalyzes the formation of a hydroxyacyl-CoA by addition of water on enoyl-CoA. Also exhibits 3-hydroxyacyl-CoA epimerase and 3-hydroxyacyl-CoA dehydrogenase activities. This Yersinia pseudotuberculosis serotype O:1b (strain IP 31758) protein is Fatty acid oxidation complex subunit alpha.